The following is a 413-amino-acid chain: Mitochondrial inner membrane magnesium transporter MFM1 (413 aa).

The transit peptide at Met-1–Asp-35 directs the protein to the mitochondrion. Asn-202 carries N-linked (GlcNAc...) asparagine glycosylation. Residues Leu-329–Leu-349 traverse the membrane as a helical segment. Positions Tyr-353 to Asn-356 match the YGMN motif. A helical membrane pass occupies residues Ala-367–Ile-387.

It belongs to the CorA metal ion transporter (MIT) (TC 1.A.35) family. As to quaternary structure, forms homooligomers. Interacts with MRS2. N-glycosylated. Glycosylation is important for correct localization of the protein.

The protein resides in the mitochondrion inner membrane. Its function is as follows. Mitochondrial inner membrane magnesium transporter required for mitochondrial magnesium homeostasis. Modulates the conductance of the MRS2 channel. Involved in the splicing of mRNA group II introns in mitochondria by affecting mitochondrial magnesium concentrations, which are critical for group II intron splicing. The polypeptide is Mitochondrial inner membrane magnesium transporter MFM1 (MFM1) (Saccharomyces cerevisiae (strain ATCC 204508 / S288c) (Baker's yeast)).